Reading from the N-terminus, the 189-residue chain is Large ribosomal subunit protein bL9 (189 aa).

The protein belongs to the bacterial ribosomal protein bL9 family.

Its function is as follows. Binds to the 23S rRNA. The protein is Large ribosomal subunit protein bL9 of Cereibacter sphaeroides (strain ATCC 17023 / DSM 158 / JCM 6121 / CCUG 31486 / LMG 2827 / NBRC 12203 / NCIMB 8253 / ATH 2.4.1.) (Rhodobacter sphaeroides).